The chain runs to 214 residues: Large ribosomal subunit protein uL16-like (214 aa).

The protein belongs to the universal ribosomal protein uL16 family. In terms of assembly, component of the 60S large ribosomal subunit (LSU).

The protein localises to the cytoplasm. In terms of biological role, testis-specific component of the ribosome, which is required for the transition from prophase to metaphase in male meiosis I. Compensates for the inactivated X-linked RPL10 paralog during spermatogenesis. The ribosome is a large ribonucleoprotein complex responsible for the synthesis of proteins in the cell. The small ribosomal subunit (SSU) binds messenger RNAs (mRNAs) and translates the encoded message by selecting cognate aminoacyl-transfer RNA (tRNA) molecules. The large subunit (LSU) contains the ribosomal catalytic site termed the peptidyl transferase center (PTC), which catalyzes the formation of peptide bonds, thereby polymerizing the amino acids delivered by tRNAs into a polypeptide chain. The nascent polypeptides leave the ribosome through a tunnel in the LSU and interact with protein factors that function in enzymatic processing, targeting, and the membrane insertion of nascent chains at the exit of the ribosomal tunnel. The protein is Large ribosomal subunit protein uL16-like (RPL10L) of Macaca fascicularis (Crab-eating macaque).